We begin with the raw amino-acid sequence, 179 residues long: Acireductone dioxygenase (179 aa).

Fe(2+) contacts are provided by His88, His90, Glu94, and His133. Residues His88, His90, Glu94, and His133 each contribute to the Ni(2+) site.

It belongs to the acireductone dioxygenase (ARD) family. In terms of assembly, monomer. Interacts with MMP14. Fe(2+) serves as cofactor. Requires Ni(2+) as cofactor.

It is found in the cytoplasm. The protein resides in the nucleus. Its subcellular location is the cell membrane. It catalyses the reaction 1,2-dihydroxy-5-(methylsulfanyl)pent-1-en-3-one + O2 = 4-methylsulfanyl-2-oxobutanoate + formate + 2 H(+). The catalysed reaction is 1,2-dihydroxy-5-(methylsulfanyl)pent-1-en-3-one + O2 = 3-(methylsulfanyl)propanoate + CO + formate + 2 H(+). Its pathway is amino-acid biosynthesis; L-methionine biosynthesis via salvage pathway; L-methionine from S-methyl-5-thio-alpha-D-ribose 1-phosphate: step 5/6. Its function is as follows. Catalyzes 2 different reactions between oxygen and the acireductone 1,2-dihydroxy-3-keto-5-methylthiopentene (DHK-MTPene) depending upon the metal bound in the active site. Fe-containing acireductone dioxygenase (Fe-ARD) produces formate and 2-keto-4-methylthiobutyrate (KMTB), the alpha-ketoacid precursor of methionine in the methionine recycle pathway. Ni-containing acireductone dioxygenase (Ni-ARD) produces methylthiopropionate, carbon monoxide and formate, and does not lie on the methionine recycle pathway. The protein is Acireductone dioxygenase (adi1) of Xenopus laevis (African clawed frog).